Reading from the N-terminus, the 373-residue chain is Dual-specificity RNA methyltransferase RlmN (373 aa).

Glu94 functions as the Proton acceptor in the catalytic mechanism. The Radical SAM core domain maps to 100–339; the sequence is EDDRATLCVS…VIVRKTRGDD (240 aa). The cysteines at positions 107 and 344 are disulfide-linked. Residues Cys114, Cys118, and Cys121 each coordinate [4Fe-4S] cluster. S-adenosyl-L-methionine-binding positions include 168–169, Ser200, 222–224, and Asn301; these read GE and SIH. Catalysis depends on Cys344, which acts as the S-methylcysteine intermediate.

The protein belongs to the radical SAM superfamily. RlmN family. The cofactor is [4Fe-4S] cluster.

Its subcellular location is the cytoplasm. The enzyme catalyses adenosine(2503) in 23S rRNA + 2 reduced [2Fe-2S]-[ferredoxin] + 2 S-adenosyl-L-methionine = 2-methyladenosine(2503) in 23S rRNA + 5'-deoxyadenosine + L-methionine + 2 oxidized [2Fe-2S]-[ferredoxin] + S-adenosyl-L-homocysteine. The catalysed reaction is adenosine(37) in tRNA + 2 reduced [2Fe-2S]-[ferredoxin] + 2 S-adenosyl-L-methionine = 2-methyladenosine(37) in tRNA + 5'-deoxyadenosine + L-methionine + 2 oxidized [2Fe-2S]-[ferredoxin] + S-adenosyl-L-homocysteine. Specifically methylates position 2 of adenine 2503 in 23S rRNA and position 2 of adenine 37 in tRNAs. m2A2503 modification seems to play a crucial role in the proofreading step occurring at the peptidyl transferase center and thus would serve to optimize ribosomal fidelity. The polypeptide is Dual-specificity RNA methyltransferase RlmN (Shewanella denitrificans (strain OS217 / ATCC BAA-1090 / DSM 15013)).